A 295-amino-acid chain; its full sequence is Elongation factor Ts (295 aa).

The tract at residues 79-82 is involved in Mg(2+) ion dislocation from EF-Tu; sequence TDFV.

The protein belongs to the EF-Ts family.

It localises to the cytoplasm. Functionally, associates with the EF-Tu.GDP complex and induces the exchange of GDP to GTP. It remains bound to the aminoacyl-tRNA.EF-Tu.GTP complex up to the GTP hydrolysis stage on the ribosome. This chain is Elongation factor Ts, found in Mycoplasma capricolum subsp. capricolum (strain California kid / ATCC 27343 / NCTC 10154).